The chain runs to 388 residues: Processive diacylglycerol beta-glucosyltransferase (388 aa).

The protein belongs to the glycosyltransferase 28 family. UgtP subfamily.

The protein localises to the cell membrane. The enzyme catalyses a 1,2-diacyl-3-O-(beta-D-glucopyranosyl)-sn-glycerol + UDP-alpha-D-glucose = a 1,2-diacyl-3-O-(beta-D-Glc-(1-&gt;6)-beta-D-Glc)-sn-glycerol + UDP + H(+). It carries out the reaction a 1,2-diacyl-3-O-(beta-D-Glc-(1-&gt;6)-beta-D-Glc)-sn-glycerol + UDP-alpha-D-glucose = a 1,2-diacyl-3-O-(beta-D-Glc-(1-&gt;6)-beta-D-Glc-(1-&gt;6)-beta-D-Glc)-sn-glycerol + UDP + H(+). The catalysed reaction is a 1,2-diacyl-sn-glycerol + UDP-alpha-D-glucose = a 1,2-diacyl-3-O-(beta-D-glucopyranosyl)-sn-glycerol + UDP + H(+). It participates in glycolipid metabolism; diglucosyl-diacylglycerol biosynthesis. Functionally, processive glucosyltransferase involved in the biosynthesis of both the bilayer- and non-bilayer-forming membrane glucolipids. Is able to successively transfer up to three glucosyl residues to diacylglycerol (DAG), thereby catalyzing the formation of beta-monoglucosyl-DAG (3-O-(beta-D-glucopyranosyl)-1,2-diacyl-sn-glycerol), beta-diglucosyl-DAG (3-O-(beta-D-glucopyranosyl-beta-(1-&gt;6)-D-glucopyranosyl)-1,2-diacyl-sn-glycerol) and beta-triglucosyl-DAG (3-O-(beta-D-glucopyranosyl-beta-(1-&gt;6)-D-glucopyranosyl-beta-(1-&gt;6)-D-glucopyranosyl)-1,2-diacyl-sn-glycerol). Beta-diglucosyl-DAG is the predominant glycolipid found in Bacillales and is also used as a membrane anchor for lipoteichoic acid (LTA). In Bacillus cereus (strain ATCC 14579 / DSM 31 / CCUG 7414 / JCM 2152 / NBRC 15305 / NCIMB 9373 / NCTC 2599 / NRRL B-3711), this protein is Processive diacylglycerol beta-glucosyltransferase.